The primary structure comprises 470 residues: Siroheme synthase 2 (470 aa).

The precorrin-2 dehydrogenase /sirohydrochlorin ferrochelatase stretch occupies residues 1–202 (MDYLPMFAKL…EDWQGAEQWL (202 aa)). NAD(+) contacts are provided by residues 22-23 (EV) and 43-44 (PE). The residue at position 126 (Ser126) is a Phosphoserine. The interval 214–470 (GEVVLVGAGP…TCDLKLVSLA (257 aa)) is uroporphyrinogen-III C-methyltransferase. Pro223 lines the S-adenosyl-L-methionine pocket. Asp246 (proton acceptor) is an active-site residue. Lys268 functions as the Proton donor in the catalytic mechanism. S-adenosyl-L-methionine contacts are provided by residues 299-301 (GGD), 329-330 (TA), Met381, and Gly410.

The protein in the N-terminal section; belongs to the precorrin-2 dehydrogenase / sirohydrochlorin ferrochelatase family. In the C-terminal section; belongs to the precorrin methyltransferase family.

The catalysed reaction is uroporphyrinogen III + 2 S-adenosyl-L-methionine = precorrin-2 + 2 S-adenosyl-L-homocysteine + H(+). It catalyses the reaction precorrin-2 + NAD(+) = sirohydrochlorin + NADH + 2 H(+). It carries out the reaction siroheme + 2 H(+) = sirohydrochlorin + Fe(2+). It functions in the pathway cofactor biosynthesis; adenosylcobalamin biosynthesis; precorrin-2 from uroporphyrinogen III: step 1/1. It participates in cofactor biosynthesis; adenosylcobalamin biosynthesis; sirohydrochlorin from precorrin-2: step 1/1. Its pathway is porphyrin-containing compound metabolism; siroheme biosynthesis; precorrin-2 from uroporphyrinogen III: step 1/1. The protein operates within porphyrin-containing compound metabolism; siroheme biosynthesis; siroheme from sirohydrochlorin: step 1/1. It functions in the pathway porphyrin-containing compound metabolism; siroheme biosynthesis; sirohydrochlorin from precorrin-2: step 1/1. Functionally, multifunctional enzyme that catalyzes the SAM-dependent methylations of uroporphyrinogen III at position C-2 and C-7 to form precorrin-2 via precorrin-1. Then it catalyzes the NAD-dependent ring dehydrogenation of precorrin-2 to yield sirohydrochlorin. Finally, it catalyzes the ferrochelation of sirohydrochlorin to yield siroheme. The sequence is that of Siroheme synthase 2 from Aeromonas hydrophila subsp. hydrophila (strain ATCC 7966 / DSM 30187 / BCRC 13018 / CCUG 14551 / JCM 1027 / KCTC 2358 / NCIMB 9240 / NCTC 8049).